The primary structure comprises 157 residues: Major allergen Alt a 1 (157 aa).

Positions Met1–Ala18 are cleaved as a signal peptide. Residues Glu35 to Leu153 enclose the AA1-like domain. Cystine bridges form between Cys74-Cys89 and Cys128-Cys140.

It belongs to the ALTA1 family. In terms of assembly, homodimer; disulfide-linked.

It localises to the spore wall. The protein resides in the secreted. May bind and inhibit the beta-glucanase activity of host plant thaumatin-like proteins. In Alternaria alternata (Alternaria rot fungus), this protein is Major allergen Alt a 1 (ALTA1).